A 466-amino-acid chain; its full sequence is Ribulose bisphosphate carboxylase large chain (466 aa).

Lysine 5 is subject to N6,N6,N6-trimethyllysine. Asparagine 114 and threonine 164 together coordinate substrate. Lysine 166 (proton acceptor) is an active-site residue. Lysine 168 is a binding site for substrate. Residues lysine 192, aspartate 194, and glutamate 195 each coordinate Mg(2+). At lysine 192 the chain carries N6-carboxylysine. Histidine 285 serves as the catalytic Proton acceptor. Substrate is bound by residues arginine 286, histidine 318, and serine 370.

This sequence belongs to the RuBisCO large chain family. Type I subfamily. In terms of assembly, heterohexadecamer of 8 large chains and 8 small chains; disulfide-linked. The disulfide link is formed within the large subunit homodimers. Requires Mg(2+) as cofactor. Post-translationally, the disulfide bond which can form in the large chain dimeric partners within the hexadecamer appears to be associated with oxidative stress and protein turnover.

The protein localises to the plastid. Its subcellular location is the chloroplast. The enzyme catalyses 2 (2R)-3-phosphoglycerate + 2 H(+) = D-ribulose 1,5-bisphosphate + CO2 + H2O. The catalysed reaction is D-ribulose 1,5-bisphosphate + O2 = 2-phosphoglycolate + (2R)-3-phosphoglycerate + 2 H(+). Functionally, ruBisCO catalyzes two reactions: the carboxylation of D-ribulose 1,5-bisphosphate, the primary event in carbon dioxide fixation, as well as the oxidative fragmentation of the pentose substrate in the photorespiration process. Both reactions occur simultaneously and in competition at the same active site. This Bixa orellana (Lipstick tree) protein is Ribulose bisphosphate carboxylase large chain.